The following is a 321-amino-acid chain: Isopenicillin N synthase (321 aa).

Positions 1 to 42 (MPVLMPSADVPTIDISPQLFGTDPTPRRTSRGRSTRPARGSG) are disordered. Residues arginine 87, tyrosine 91, and tyrosine 188 each coordinate isopenicillin N. N-[(5S)-5-amino-5-carboxypentanoyl]-L-cysteinyl-D-valine is bound by residues arginine 87, tyrosine 91, tyrosine 188, histidine 213, and aspartate 215. In terms of domain architecture, Fe2OG dioxygenase spans 179 to 287 (TLSAVSMIRY…RLSLPFFLHA (109 aa)). Fe(2+) is bound by residues histidine 213, aspartate 215, and histidine 269. Arginine 278 lines the 2-oxoglutarate pocket. Position 280 (serine 280) interacts with isopenicillin N. Serine 280 contacts N-[(5S)-5-amino-5-carboxypentanoyl]-L-cysteinyl-D-valine.

The protein belongs to the iron/ascorbate-dependent oxidoreductase family. Fe cation serves as cofactor. Requires L-ascorbate as cofactor.

The catalysed reaction is N-[(5S)-5-amino-5-carboxypentanoyl]-L-cysteinyl-D-valine + O2 = isopenicillin N + 2 H2O. The protein operates within antibiotic biosynthesis; penicillin G biosynthesis; penicillin G from L-alpha-aminoadipate and L-cysteine and L-valine: step 2/3. Removes, in the presence of oxygen, 4 hydrogen atoms from delta-L-(alpha-aminoadipyl)-L-cysteinyl-D-valine (ACV) to form the azetidinone and thiazolidine rings of isopenicillin. The protein is Isopenicillin N synthase (pcbC) of Streptantibioticus cattleyicolor (Streptomyces cattleya).